Consider the following 601-residue polypeptide: MVKMSIQLNEFQKKALQSFLMSDKNLLITAPTGTGKSFLAMLMAMETKSRVVYTVPLRALALQLNDDFHNKVAPLVNGYADSVALTSEVYEEDPENLEERVIFTTYEKADAIFRRHYPWTDRIETLIIDEIHNIGDKERGKAIENLIAYAMNEGIRIVAMSATIPDVNKIAEIIDAEIIKTDERPIPLYKAVKIGNKLYFEDGDVIELKEDFIKKMVRKNKVVMIFTSTRKKAEELYMIYDRKFQNKVAFFHAGLDAETKLRLLEETRQGKYNIIVSTTALSQGVNFPFYAVVFDDLKLPIIEYGRFTGWKQITPIEFDQICGRAGRPGYDEEGLCIIEATDIRQAEKLKRTYFNTSYGTITGHHVLEDFLLALISKYIYAKPDRIMEATKHTISFRNISEELVKEKLEELKNAKLIGEDGTGYFVTLYGRAVAESYFDVKDAITYHDVLTKNNVKEEEIINAILENENVLNASKGENVNIIFNSWIKGVDEKTIVKATKNMTLNDLNKLVQTLSWQTYGVYRITKALGKKELADKLRLLFLEIRYGVPASALALVQLPGIGRKRAIELMRNGIHNKTELCSQKEISKKIIGEKMVKVLCK.

The region spanning 17–182 is the Helicase ATP-binding domain; that stretch reads QSFLMSDKNL…IIDAEIIKTD (166 aa). An ATP-binding site is contributed by 30 to 37; it reads APTGTGKS. A DEAH box motif is present at residues 129 to 132; sequence DEIH. The Helicase C-terminal domain occupies 208-375; that stretch reads LKEDFIKKMV…VLEDFLLALI (168 aa).

The polypeptide is Putative helicase 7 (SIFV0007) (Saccharolobus islandicus (Sulfolobus islandicus)).